Here is a 94-residue protein sequence, read N- to C-terminus: Selenoprotein K (94 aa).

A helical membrane pass occupies residues 20 to 42 (VSFLTDFFWGIAEFVVFFFKTLL). The tract at residues 46-94 (VKKRRGYGSSSDSRYDDGRGPPGNPPRRMGRISHLRGPSPPPMAGGUGR) is disordered. A non-standard amino acid (selenocysteine) is located at residue Sec92.

It belongs to the selenoprotein K family. Interacts with DERL1, DERL2, DERL3 and SELENOS. The SELENOK-SELENOS complex interacts with VCP. Interacts with ZDHHC6. Post-translationally, cleaved by CAPN2/m-calpain in resting macrophages but not in activated macrophages. Macrophage activation up-regulates expression of the calpain inhibitor CAST/calpastatin, resulting in inhibition of CAPN2 activity. Truncated SELENOK proteins produced by failed UGA/Sec decoding are ubiquitinated by the CRL2(KLHDC2) complex, which recognizes the diglycine (Gly-Gly) at the C-terminus of truncated SELENOK proteins. In terms of tissue distribution, high expression in spleen and intestine (at protein level). Expressed in a range of immune cells including T and B-cells and also in myeloid cells including macrophages, neutrophils and dendritic cells (at protein level).

The protein localises to the endoplasmic reticulum membrane. Its subcellular location is the cell membrane. Functionally, required for Ca(2+) flux in immune cells and plays a role in T-cell proliferation and in T-cell and neutrophil migration. Involved in endoplasmic reticulum-associated degradation (ERAD) of soluble glycosylated proteins. Required for palmitoylation and cell surface expression of CD36 and involved in macrophage uptake of low-density lipoprotein and in foam cell formation. Together with ZDHHC6, required for palmitoylation of ITPR1 in immune cells, leading to regulate ITPR1 stability and function. Plays a role in protection of cells from ER stress-induced apoptosis. Protects cells from oxidative stress when overexpressed in cardiomyocytes. The sequence is that of Selenoprotein K from Mus musculus (Mouse).